The chain runs to 279 residues: Shikimate dehydrogenase (NADP(+)) (279 aa).

Residues 19–21 (SFS) and T66 contribute to the shikimate site. K70 serves as the catalytic Proton acceptor. Position 82 (E82) interacts with NADP(+). The shikimate site is built by N91 and D106. NADP(+) contacts are provided by residues 130–134 (GSGGA) and L222. Y224 provides a ligand contact to shikimate. G245 contributes to the NADP(+) binding site.

It belongs to the shikimate dehydrogenase family. As to quaternary structure, homodimer.

It catalyses the reaction shikimate + NADP(+) = 3-dehydroshikimate + NADPH + H(+). It functions in the pathway metabolic intermediate biosynthesis; chorismate biosynthesis; chorismate from D-erythrose 4-phosphate and phosphoenolpyruvate: step 4/7. Involved in the biosynthesis of the chorismate, which leads to the biosynthesis of aromatic amino acids. Catalyzes the reversible NADPH linked reduction of 3-dehydroshikimate (DHSA) to yield shikimate (SA). The protein is Shikimate dehydrogenase (NADP(+)) of Methanococcus maripaludis (strain C6 / ATCC BAA-1332).